Consider the following 210-residue polypeptide: Outer-membrane lipoprotein carrier protein (210 aa).

The N-terminal stretch at 1-26 (MHMIRRAAGALAVFAVAALAAAPAWA) is a signal peptide.

It belongs to the LolA family. As to quaternary structure, monomer.

The protein resides in the periplasm. In terms of biological role, participates in the translocation of lipoproteins from the inner membrane to the outer membrane. Only forms a complex with a lipoprotein if the residue after the N-terminal Cys is not an aspartate (The Asp acts as a targeting signal to indicate that the lipoprotein should stay in the inner membrane). In Bordetella pertussis (strain Tohama I / ATCC BAA-589 / NCTC 13251), this protein is Outer-membrane lipoprotein carrier protein.